Here is a 476-residue protein sequence, read N- to C-terminus: Bifunctional protein HldE (476 aa).

Residues 1 to 319 form a ribokinase region; it reads MKVSLPAFEK…EALALHHGES (319 aa). 195-198 serves as a coordination point for ATP; that stretch reads NMSE. Residue Asp-264 is part of the active site. Residues 345-476 form a cytidylyltransferase region; the sequence is MTNGCFDILH…AIIQNIMANQ (132 aa).

In the N-terminal section; belongs to the carbohydrate kinase PfkB family. This sequence in the C-terminal section; belongs to the cytidylyltransferase family. Homodimer.

The catalysed reaction is D-glycero-beta-D-manno-heptose 7-phosphate + ATP = D-glycero-beta-D-manno-heptose 1,7-bisphosphate + ADP + H(+). It carries out the reaction D-glycero-beta-D-manno-heptose 1-phosphate + ATP + H(+) = ADP-D-glycero-beta-D-manno-heptose + diphosphate. The protein operates within nucleotide-sugar biosynthesis; ADP-L-glycero-beta-D-manno-heptose biosynthesis; ADP-L-glycero-beta-D-manno-heptose from D-glycero-beta-D-manno-heptose 7-phosphate: step 1/4. Its pathway is nucleotide-sugar biosynthesis; ADP-L-glycero-beta-D-manno-heptose biosynthesis; ADP-L-glycero-beta-D-manno-heptose from D-glycero-beta-D-manno-heptose 7-phosphate: step 3/4. Functionally, catalyzes the phosphorylation of D-glycero-D-manno-heptose 7-phosphate at the C-1 position to selectively form D-glycero-beta-D-manno-heptose-1,7-bisphosphate. Catalyzes the ADP transfer from ATP to D-glycero-beta-D-manno-heptose 1-phosphate, yielding ADP-D-glycero-beta-D-manno-heptose. The chain is Bifunctional protein HldE from Shewanella baltica (strain OS195).